A 1388-amino-acid polypeptide reads, in one-letter code: DNA-directed RNA polymerase subunit beta' (1388 aa).

Zn(2+)-binding residues include C65, C67, C80, and C83. Residues D456, D458, and D460 each contribute to the Mg(2+) site. Zn(2+) contacts are provided by C812, C887, C894, and C897.

This sequence belongs to the RNA polymerase beta' chain family. In terms of assembly, the RNAP catalytic core consists of 2 alpha, 1 beta, 1 beta' and 1 omega subunit. When a sigma factor is associated with the core the holoenzyme is formed, which can initiate transcription. The cofactor is Mg(2+). It depends on Zn(2+) as a cofactor.

The catalysed reaction is RNA(n) + a ribonucleoside 5'-triphosphate = RNA(n+1) + diphosphate. Its function is as follows. DNA-dependent RNA polymerase catalyzes the transcription of DNA into RNA using the four ribonucleoside triphosphates as substrates. This Protochlamydia amoebophila (strain UWE25) protein is DNA-directed RNA polymerase subunit beta'.